A 191-amino-acid polypeptide reads, in one-letter code: Probable chemoreceptor glutamine deamidase CheD (191 aa).

The protein belongs to the CheD family.

It carries out the reaction L-glutaminyl-[protein] + H2O = L-glutamyl-[protein] + NH4(+). Its function is as follows. Probably deamidates glutamine residues to glutamate on methyl-accepting chemotaxis receptors (MCPs), playing an important role in chemotaxis. The polypeptide is Probable chemoreceptor glutamine deamidase CheD (Hydrogenovibrio crunogenus (strain DSM 25203 / XCL-2) (Thiomicrospira crunogena)).